A 784-amino-acid polypeptide reads, in one-letter code: Probable aminopeptidase 1 (784 aa).

Substrate is bound by residues Glu103 and 236–240 (GAMEN). His271 is a Zn(2+) binding site. Glu272 (proton acceptor) is an active-site residue. The Zn(2+) site is built by His275 and Glu294.

This sequence belongs to the peptidase M1 family. Requires Zn(2+) as cofactor.

Its subcellular location is the cytoplasm. The sequence is that of Probable aminopeptidase 1 (ape1) from Saccharolobus solfataricus (strain ATCC 35092 / DSM 1617 / JCM 11322 / P2) (Sulfolobus solfataricus).